The following is a 205-amino-acid chain: Low-density lipoprotein receptor class A domain-containing protein 1 (205 aa).

The helical transmembrane segment at L43–P63 threads the bilayer. In terms of domain architecture, LDL-receptor class A 1 spans A71–R114. 6 disulfides stabilise this stretch: C72–C89, C83–C102, C96–C113, C141–C160, C163–C180, and C170–C193. One can recognise an LDL-receptor class A 2; atypical domain in the interval D115–P161. Positions P162–P203 constitute an LDL-receptor class A 3; atypical domain.

It belongs to the LDLR family.

Its subcellular location is the membrane. This chain is Low-density lipoprotein receptor class A domain-containing protein 1 (LDLRAD1), found in Homo sapiens (Human).